The sequence spans 163 residues: MEISPYCLLSLLPIFLLSGFSLSYDEFDGHAATSRALLQTRTTCKEDFANKNYTIITSRCKGPNYPANVCCSAFKDFACPFAEVLNDEKNDCASTMFSYINLYGRYPPGIFANMCKEGKEGLDCTDVTQSASATSDSIPRASTTASLAVLSTFLVLCLLFLSS.

Positions 1–23 (MEISPYCLLSLLPIFLLSGFSLS) are cleaved as a signal peptide. The N-linked (GlcNAc...) asparagine glycan is linked to Asn-52. A lipid anchor (GPI-anchor amidated serine) is attached at Ser-135. Positions 136 to 163 (DSIPRASTTASLAVLSTFLVLCLLFLSS) are cleaved as a propeptide — removed in mature form.

In terms of tissue distribution, expressed in pollen, pollen tubes, sporophytic pistil tissues, in the early stages of female gametophyte development, and in unfertilized, mature ovules.

Its subcellular location is the cell membrane. The protein is GPI-anchored protein LLG2 of Arabidopsis thaliana (Mouse-ear cress).